A 124-amino-acid chain; its full sequence is MVKEFKEFISRGNMMDLAVGVIIGAAFTAIVNSLVKDLINPLIGLFIGKIDLSNLKFTIGEATFKYGSFLNAVINFLIIALVVFFLIKLVNKITPKKEVEEDPAPTNEEIYLRQIRDLLQEKNK.

A run of 2 helical transmembrane segments spans residues 15 to 35 (MDLAVGVIIGAAFTAIVNSLV) and 67 to 87 (GSFLNAVINFLIIALVVFFLI).

The protein belongs to the MscL family. In terms of assembly, homopentamer.

It localises to the cell membrane. Channel that opens in response to stretch forces in the membrane lipid bilayer. May participate in the regulation of osmotic pressure changes within the cell. The protein is Large-conductance mechanosensitive channel of Lactobacillus johnsonii (strain CNCM I-12250 / La1 / NCC 533).